A 201-amino-acid chain; its full sequence is Putative manganese efflux pump MntP (201 aa).

Helical transmembrane passes span 6–26 (CLAV…ATGI), 39–59 (LAFH…TLGL), 105–125 (LTLI…GLSL), 127–147 (VLGI…LLFT), and 169–189 (LAGG…HGVF).

This sequence belongs to the MntP (TC 9.B.29) family.

Its subcellular location is the cell inner membrane. In terms of biological role, probably functions as a manganese efflux pump. The protein is Putative manganese efflux pump MntP of Nitratidesulfovibrio vulgaris (strain ATCC 29579 / DSM 644 / CCUG 34227 / NCIMB 8303 / VKM B-1760 / Hildenborough) (Desulfovibrio vulgaris).